Here is a 64-residue protein sequence, read N- to C-terminus: uncharacterized protein (64 aa).

Positions 1 to 26 (MVVKENFCGACLTIPLAFAGAGTAIG) are cleaved as a signal peptide. The chain crosses the membrane as a helical span at residues 33–53 (IKKWSIVITIISLLLTVWFIY).

This sequence belongs to the IIV-6 010R family.

It localises to the host membrane. This is an uncharacterized protein from Aedes vexans (Inland floodwater mosquito).